A 72-amino-acid polypeptide reads, in one-letter code: Hirudin variant-2 (72 aa).

The N-terminal stretch at 1–7 (AICVSQA) is a signal peptide. Residues 8 to 10 (ITY) are interaction with thrombin active site. 3 disulfide bridges follow: Cys13/Cys21, Cys23/Cys35, and Cys29/Cys46. Residues 47-72 (VTGEGTPNPESHNNGDFEEIPEEYLQ) are disordered. An O-linked (GalNAc...) threonine glycan is attached at Thr52. An interaction with fibrinogen-binding exosite of thrombin region spans residues 62–72 (DFEEIPEEYLQ). The span at 62 to 72 (DFEEIPEEYLQ) shows a compositional bias: acidic residues. Tyr70 bears the Sulfotyrosine mark.

Belongs to the protease inhibitor I14 (hirudin) family.

It is found in the secreted. In terms of biological role, hirudin is a potent thrombin-specific protease inhibitor. It forms a stable non-covalent complex with alpha-thrombin, thereby abolishing its ability to cleave fibrinogen. The polypeptide is Hirudin variant-2 (Hirudo medicinalis (Medicinal leech)).